A 258-amino-acid polypeptide reads, in one-letter code: Small ribosomal subunit protein uS2 (258 aa).

This sequence belongs to the universal ribosomal protein uS2 family.

The sequence is that of Small ribosomal subunit protein uS2 from Streptococcus suis (strain 98HAH33).